Consider the following 649-residue polypeptide: Probable cyclic nucleotide-gated ion channel 12 (649 aa).

At 1 to 43 (MNHRRSKFARIDSMGVDGKLKSVRGRLKKVYGKMKTLENWRKT) the chain is on the cytoplasmic side. The helical transmembrane segment at 44 to 64 (VLLACVVALAIDPLFLFIPLI) threads the bilayer. Topologically, residues 65 to 76 (DSQRFCFTFDKT) are extracellular. Residues 77 to 97 (LVAVVCVIRTFIDTFYVIHII) traverse the membrane as a helical segment. Residues 98–128 (YYLITETIAPRSQASLRGEIVVHSKATLKTR) lie on the Cytoplasmic side of the membrane. The helical transmembrane segment at 129–149 (LLFHFIVDIISVLPIPQVVVL) threads the bilayer. Residues 150-162 (TLIPLSASLVSER) are Extracellular-facing. The helical transmembrane segment at 163–183 (ILKWIILSQYVPRIIRMYPLY) threads the bilayer. The Cytoplasmic segment spans residues 184 to 200 (KEVTRAFGTVAESKWAG). A helical membrane pass occupies residues 201 to 221 (AALNLFLYMLHSYVFGAFWYL). Residues 222–329 (SSIERKSKCW…QNLETSNSAG (108 aa)) lie on the Extracellular side of the membrane. Residues 330-350 (EIFFAIIICVSGLLLFAVLIG) form a helical membrane-spanning segment. At 351-649 (NVQKYLQSST…ADLEFAKAEA (299 aa)) the chain is on the cytoplasmic side. A nucleoside 3',5'-cyclic phosphate-binding positions include 436-559 (LNIM…TFRL) and E507. Positions 545 to 560 (LNVFQRQKLQRTFRLY) are calmodulin-binding. An IQ domain is found at 565–594 (RSWAAFFIQAAWRKHCKRKLSKTRDNENIP). The tract at residues 618–649 (RRKDTADCSSSPDMSPPVPHKPADLEFAKAEA) is disordered. A compositionally biased stretch (basic and acidic residues) spans 638 to 649 (KPADLEFAKAEA).

The protein belongs to the cyclic nucleotide-gated cation channel (TC 1.A.1.5) family. In terms of assembly, homotetramer or heterotetramer.

The protein resides in the cell membrane. Functionally, probable cyclic nucleotide-gated ion channel. The polypeptide is Probable cyclic nucleotide-gated ion channel 12 (CNGC12) (Arabidopsis thaliana (Mouse-ear cress)).